The sequence spans 150 residues: Urease accessory protein UreE (150 aa).

Belongs to the UreE family.

The protein localises to the cytoplasm. Its function is as follows. Involved in urease metallocenter assembly. Binds nickel. Probably functions as a nickel donor during metallocenter assembly. In Streptococcus salivarius (strain 57.I), this protein is Urease accessory protein UreE.